We begin with the raw amino-acid sequence, 37 residues long: Large ribosomal subunit protein bL36B (37 aa).

Belongs to the bacterial ribosomal protein bL36 family.

The chain is Large ribosomal subunit protein bL36B from Paenarthrobacter aurescens (strain TC1).